A 488-amino-acid chain; its full sequence is Capsid protein (488 aa).

A compositionally biased stretch (acidic residues) spans 80–93 (ISEDESDSGEEPEF). The disordered stretch occupies residues 80–143 (ISEDESDSGE…QPKTIPGQKQ (64 aa)). A compositionally biased stretch (basic and acidic residues) spans 94 to 109 (EQVRMDRTGGTEIPKE). The short motif at 121–124 (RKRK) is the Nuclear localization signal element. The segment covering 134–143 (QPKTIPGQKQ) has biased composition (polar residues). Residues 410 to 427 (CRCWICNIEGHYANECPN) form a CCHC-type zinc finger. The disordered stretch occupies residues 463-488 (YKEEEEETSTEESDDESSTSEDSDSD). Residues 464–488 (KEEEEETSTEESDDESSTSEDSDSD) show a composition bias toward acidic residues.

It belongs to the caulimoviridae capsid protein family. As to quaternary structure, interacts (via nuclear localization signal) with host importin alpha.

It is found in the virion. The protein localises to the host nucleus. In terms of biological role, self assembles to form an icosahedral capsid, about 50 nm in diameter, nm, composed of 420 subunits of the viral capsid protein. The capsid encapsulates the genomic dsDNA. Following virus entry into host cell, provides nuclear import of the viral genome. Virus particles do not enter the nucleus, but dock at the nuclear membrane through the interaction with host importins. The protein is Capsid protein of Arabidopsis thaliana (Mouse-ear cress).